The following is a 263-amino-acid chain: Ribonuclease HII (263 aa).

The RNase H type-2 domain maps to 71–262 (QAIAGIDEVG…VKSMCCDSTN (192 aa)). Residues aspartate 77, glutamate 78, and aspartate 172 each coordinate a divalent metal cation.

It belongs to the RNase HII family. Mn(2+) serves as cofactor. Requires Mg(2+) as cofactor.

It localises to the cytoplasm. It carries out the reaction Endonucleolytic cleavage to 5'-phosphomonoester.. Functionally, endonuclease that specifically degrades the RNA of RNA-DNA hybrids. In Streptococcus pyogenes serotype M4 (strain MGAS10750), this protein is Ribonuclease HII.